The following is a 348-amino-acid chain: Protein pelota homolog (348 aa).

The protein belongs to the eukaryotic release factor 1 family. Pelota subfamily. In terms of assembly, monomer. It depends on a divalent metal cation as a cofactor.

Its subcellular location is the cytoplasm. Functionally, may function in recognizing stalled ribosomes, interact with stem-loop structures in stalled mRNA molecules, and effect endonucleolytic cleavage of the mRNA. May play a role in the release non-functional ribosomes and degradation of damaged mRNAs. Has endoribonuclease activity. The protein is Protein pelota homolog of Methanococcus maripaludis (strain DSM 14266 / JCM 13030 / NBRC 101832 / S2 / LL).